Consider the following 316-residue polypeptide: MNLDYLDFEQPIVELEEKIQALDNIKDKADIVDEMGALKIKSNALTKKIFSSLSDWQISQLARHPKRLYTLDYISHVFDEFTELHGDRIYGDDHAIIGGIARLDAQPVMFIGQQKGRTTQEKLKYNFGMPRPEGYRKALRLMKLSEKFSMPIITFIDTPGAYPGIGAEERGQSEAIAKNLFEMSTLATPIISVVIGEGGSGGALAIGVADIIMMFKYSIYSVISPEGCASILYKDATKANLAAESLKLTSAHLKENGLIDIIIDEPLGGIHRDPSQAKVLLKEALIQQLNEIKQLPIEQLLQNRQEKLLNFGKFKD.

In terms of domain architecture, CoA carboxyltransferase C-terminal spans 24 to 291; sequence NIKDKADIVD…KEALIQQLNE (268 aa).

Belongs to the AccA family. As to quaternary structure, acetyl-CoA carboxylase is a heterohexamer composed of biotin carboxyl carrier protein (AccB), biotin carboxylase (AccC) and two subunits each of ACCase subunit alpha (AccA) and ACCase subunit beta (AccD).

It is found in the cytoplasm. It carries out the reaction N(6)-carboxybiotinyl-L-lysyl-[protein] + acetyl-CoA = N(6)-biotinyl-L-lysyl-[protein] + malonyl-CoA. The protein operates within lipid metabolism; malonyl-CoA biosynthesis; malonyl-CoA from acetyl-CoA: step 1/1. In terms of biological role, component of the acetyl coenzyme A carboxylase (ACC) complex. First, biotin carboxylase catalyzes the carboxylation of biotin on its carrier protein (BCCP) and then the CO(2) group is transferred by the carboxyltransferase to acetyl-CoA to form malonyl-CoA. This chain is Acetyl-coenzyme A carboxylase carboxyl transferase subunit alpha, found in Ruthia magnifica subsp. Calyptogena magnifica.